The primary structure comprises 337 residues: MSQPPAAHVPVLYTQVLDGLQVTENGTYLDGTFGRGGHARGVLEHLGPGGRLLVMDKDPEAIAVAEHSFGGDARVSIHRGSFAGLGQVVAAATVDGILLDLGVSSPQLDVAGRGFSFGKDGPLDMRMDPDNGQSAAQWLAQASEREIADVLWTYGEERQSRRIARAIVARRAEQPLLRTAQLADLIASVMPRGDSKTHPATRSFQAIRIHINRELADLEAGLDAALDALKPGGRLAVISFHSLEDRIVKQFMARYAKAPPSNRRLPEAQPFVPTLQLVSGAIKADDAELNVNPRARSAVLRVAEKLGVGIRNSGLEERSKRIPNPQSPIPASQGDAQ.

S-adenosyl-L-methionine-binding positions include 36-38, Asp-56, Phe-82, Asp-100, and Gln-107; that span reads GGH. The segment at 315–337 is disordered; that stretch reads LEERSKRIPNPQSPIPASQGDAQ.

The protein belongs to the methyltransferase superfamily. RsmH family.

It is found in the cytoplasm. It carries out the reaction cytidine(1402) in 16S rRNA + S-adenosyl-L-methionine = N(4)-methylcytidine(1402) in 16S rRNA + S-adenosyl-L-homocysteine + H(+). Its function is as follows. Specifically methylates the N4 position of cytidine in position 1402 (C1402) of 16S rRNA. This Xanthomonas euvesicatoria pv. vesicatoria (strain 85-10) (Xanthomonas campestris pv. vesicatoria) protein is Ribosomal RNA small subunit methyltransferase H.